Reading from the N-terminus, the 1213-residue chain is DNA-directed RNA polymerase subunit beta' (1213 aa).

Zn(2+) contacts are provided by cysteine 60, cysteine 62, cysteine 75, and cysteine 78. Positions 450, 452, and 454 each coordinate Mg(2+). Residues cysteine 819, cysteine 893, cysteine 900, and cysteine 903 each coordinate Zn(2+).

The protein belongs to the RNA polymerase beta' chain family. In terms of assembly, the RNAP catalytic core consists of 2 alpha, 1 beta, 1 beta' and 1 omega subunit. When a sigma factor is associated with the core the holoenzyme is formed, which can initiate transcription. It depends on Mg(2+) as a cofactor. The cofactor is Zn(2+).

The catalysed reaction is RNA(n) + a ribonucleoside 5'-triphosphate = RNA(n+1) + diphosphate. DNA-dependent RNA polymerase catalyzes the transcription of DNA into RNA using the four ribonucleoside triphosphates as substrates. The protein is DNA-directed RNA polymerase subunit beta' of Streptococcus pyogenes serotype M2 (strain MGAS10270).